The sequence spans 158 residues: Low molecular weight phosphotyrosine protein phosphatase (158 aa).

Alanine 2 carries the post-translational modification N-acetylalanine. Cysteine 13 (nucleophile) is an active-site residue. Arginine 19 is an active-site residue. The active-site Proton donor is the aspartate 130. Phosphotyrosine is present on residues tyrosine 132 and tyrosine 133.

Belongs to the low molecular weight phosphotyrosine protein phosphatase family. As to quaternary structure, interacts with EPHA2; dephosphorylates EPHA2. Interacts with EPHB1. Interacts with the SH3 domain of SPTAN1. Phosphorylated by LCK. Phosphorylation at Tyr-132 increases its phosphatase activity.

The protein localises to the cytoplasm. The enzyme catalyses O-phospho-L-tyrosyl-[protein] + H2O = L-tyrosyl-[protein] + phosphate. It catalyses the reaction a phosphate monoester + H2O = an alcohol + phosphate. Inhibited by sulfhydryl reagents. Its function is as follows. Acts on tyrosine phosphorylated proteins, low-MW aryl phosphates and natural and synthetic acyl phosphates with differences in substrate specificity between isoform 1 and isoform 2. This is Low molecular weight phosphotyrosine protein phosphatase (ACP1) from Pongo abelii (Sumatran orangutan).